A 242-amino-acid chain; its full sequence is Small ribosomal subunit protein uS7m (242 aa).

Residues 1–37 (MAAPALRAPLRWSGLALGVRCAVWNLPGLTQVRGSRY) constitute a mitochondrion transit peptide. Lys228 bears the N6-acetyllysine mark.

Belongs to the universal ribosomal protein uS7 family. As to quaternary structure, component of the mitochondrial ribosome small subunit (28S) which comprises a 12S rRNA and about 30 distinct proteins.

It localises to the mitochondrion. The chain is Small ribosomal subunit protein uS7m (Mrps7) from Mus musculus (Mouse).